We begin with the raw amino-acid sequence, 483 residues long: Glutamyl-tRNA(Gln) amidotransferase subunit A (483 aa).

Catalysis depends on charge relay system residues Lys-76 and Ser-151. Ser-175 serves as the catalytic Acyl-ester intermediate.

It belongs to the amidase family. GatA subfamily. In terms of assembly, heterotrimer of A, B and C subunits.

It catalyses the reaction L-glutamyl-tRNA(Gln) + L-glutamine + ATP + H2O = L-glutaminyl-tRNA(Gln) + L-glutamate + ADP + phosphate + H(+). Allows the formation of correctly charged Gln-tRNA(Gln) through the transamidation of misacylated Glu-tRNA(Gln) in organisms which lack glutaminyl-tRNA synthetase. The reaction takes place in the presence of glutamine and ATP through an activated gamma-phospho-Glu-tRNA(Gln). In Pseudomonas putida (strain ATCC 47054 / DSM 6125 / CFBP 8728 / NCIMB 11950 / KT2440), this protein is Glutamyl-tRNA(Gln) amidotransferase subunit A.